A 71-amino-acid polypeptide reads, in one-letter code: MRTEQITARALKQVGDDRYKLSLIVAKRAEALANGAIALVDADTSKMKFADIALLEVAEGKIGLEAIVEGK.

The protein belongs to the RNA polymerase subunit omega family. The RNAP catalytic core consists of 2 alpha, 1 beta, 1 beta' and 1 omega subunit. When a sigma factor is associated with the core the holoenzyme is formed, which can initiate transcription.

It carries out the reaction RNA(n) + a ribonucleoside 5'-triphosphate = RNA(n+1) + diphosphate. Its function is as follows. Promotes RNA polymerase assembly. Latches the N- and C-terminal regions of the beta' subunit thereby facilitating its interaction with the beta and alpha subunits. The polypeptide is DNA-directed RNA polymerase subunit omega (Campylobacter concisus (strain 13826)).